The chain runs to 300 residues: Bifunctional protein FolD 2 (300 aa).

NADP(+)-binding positions include 165 to 167, serine 190, and isoleucine 231; that span reads GRS.

Belongs to the tetrahydrofolate dehydrogenase/cyclohydrolase family. As to quaternary structure, homodimer.

It carries out the reaction (6R)-5,10-methylene-5,6,7,8-tetrahydrofolate + NADP(+) = (6R)-5,10-methenyltetrahydrofolate + NADPH. The enzyme catalyses (6R)-5,10-methenyltetrahydrofolate + H2O = (6R)-10-formyltetrahydrofolate + H(+). The protein operates within one-carbon metabolism; tetrahydrofolate interconversion. Its function is as follows. Catalyzes the oxidation of 5,10-methylenetetrahydrofolate to 5,10-methenyltetrahydrofolate and then the hydrolysis of 5,10-methenyltetrahydrofolate to 10-formyltetrahydrofolate. The sequence is that of Bifunctional protein FolD 2 from Pseudomonas syringae pv. tomato (strain ATCC BAA-871 / DC3000).